The sequence spans 122 residues: Protein FLORAL ORGAN NUMBER2 (122 aa).

Residues 1–25 (MGRLFLCLVVAWCWVALLLVAPVHG) form the signal peptide. A disordered region spans residues 28–122 (GLPGEFSGDQ…PEHARSTGRP (95 aa)). The segment covering 54 to 63 (KQPRGVKGTR) has biased composition (basic residues). The segment covering 64-77 (RPSWSSWSSTASRS) has biased composition (low complexity). Residues 111–122 (RRPEHARSTGRP) are compositionally biased toward basic and acidic residues.

Belongs to the CLV3/ESR signal peptide family.

The protein resides in the secreted. Probable extracellular signal that regulates meristem maintenance. May function as a putative ligand for a receptor complex including FON1. Regulates the size of the floral meristem and the number of floral organs. In Oryza sativa subsp. indica (Rice), this protein is Protein FLORAL ORGAN NUMBER2 (FON2).